Consider the following 202-residue polypeptide: Tetranectin (202 aa).

A signal peptide spans 1-21; that stretch reads MELWGPCVLLCLFSLLTQVTA. Cystine bridges form between C71–C81, C98–C197, and C173–C189. The 122-residue stretch at 77 to 198 folds into the C-type lectin domain; sequence VHMKCFLAFV…CRDKLPYVCQ (122 aa).

Homotrimer.

The protein localises to the secreted. In terms of biological role, tetranectin binds to plasminogen and to isolated kringle 4. May be involved in the packaging of molecules destined for exocytosis. Plays a role in retinal function. This is Tetranectin (CLEC3B) from Bos taurus (Bovine).